We begin with the raw amino-acid sequence, 344 residues long: 4-dimethylallyltryptophan N-methyltransferase easF (344 aa).

The protein belongs to the methyltransferase superfamily. As to quaternary structure, homodimer.

The enzyme catalyses 4-(3-methylbut-2-enyl)-L-tryptophan + S-adenosyl-L-methionine = 4-(3-methylbut-2-enyl)-L-abrine + S-adenosyl-L-homocysteine + H(+). It functions in the pathway alkaloid biosynthesis; ergot alkaloid biosynthesis. 4-dimethylallyltryptophan N-methyltransferase; part of the gene cluster that mediates the biosynthesis of fungal ergot alkaloid. DmaW catalyzes the first step of ergot alkaloid biosynthesis by condensing dimethylallyl diphosphate (DMAP) and tryptophan to form 4-dimethylallyl-L-tryptophan. The second step is catalyzed by the methyltransferase easF that methylates 4-dimethylallyl-L-tryptophan in the presence of S-adenosyl-L-methionine, resulting in the formation of 4-dimethylallyl-L-abrine. The catalase easC and the FAD-dependent oxidoreductase easE then transform 4-dimethylallyl-L-abrine to chanoclavine-I which is further oxidized by easD in the presence of NAD(+), resulting in the formation of chanoclavine-I aldehyde. Agroclavine dehydrogenase easG then mediates the conversion of chanoclavine-I aldehyde to agroclavine via a non-enzymatic adduct reaction: the substrate is an iminium intermediate that is formed spontaneously from chanoclavine-I aldehyde in the presence of glutathione. The presence of easA is not required to complete this reaction. Further conversion of agroclavine to paspalic acid is a two-step process involving oxidation of agroclavine to elymoclavine and of elymoclavine to paspalic acid, the second step being performed by the elymoclavine oxidase cloA. Paspalic acid is then further converted to D-lysergic acid. Ergopeptines are assembled from D-lysergic acid and three different amino acids by the D-lysergyl-peptide-synthetases composed each of a monomudular and a trimodular nonribosomal peptide synthetase subunit. LpsB and lpsC encode the monomodular subunits responsible for D-lysergic acid activation and incorporation into the ergopeptine backbone. LpsA1 and A2 subunits encode the trimodular nonribosomal peptide synthetase assembling the tripeptide portion of ergopeptines. LpsA1 is responsible for formation of the major ergopeptine, ergotamine, and lpsA2 for alpha-ergocryptine, the minor ergopeptine of the total alkaloid mixture elaborated by C.purpurea. D-lysergyl-tripeptides are assembled by the nonribosomal peptide synthetases and released as N-(D-lysergyl-aminoacyl)-lactams. Cyclolization of the D-lysergyl-tripeptides is performed by the Fe(2+)/2-ketoglutarate-dependent dioxygenase easH which introduces a hydroxyl group into N-(D-lysergyl-aminoacyl)-lactam at alpha-C of the aminoacyl residue followed by spontaneous condensation with the terminal lactam carbonyl group. This chain is 4-dimethylallyltryptophan N-methyltransferase easF, found in Claviceps purpurea (strain 20.1) (Ergot fungus).